The following is a 1008-amino-acid chain: ATP-dependent DNA/RNA helicase DHX36 (1008 aa).

The tract at residues 1-51 (MSYDYHQNWGRDGGPRSSGGGYGGGPAGGHGGNRGSGGGGGGGGGGRGGRG) is required for recruitment to cytoplasmic stress granules. The interval 1–58 (MSYDYHQNWGRDGGPRSSGGGYGGGPAGGHGGNRGSGGGGGGGGGGRGGRGRHPGHLK) is disordered. The interval 1–104 (MSYDYHQNWG…IVQLLNSVQA (104 aa)) is required for the pre-miR-134 transport. Residues 1–200 (MSYDYHQNWG…KKNDLRYIEM (200 aa)) form a necessary for nuclear and nucleolar caps localizations region. The segment covering 16 to 48 (RSSGGGYGGGPAGGHGGNRGSGGGGGGGGGGRG) has biased composition (gly residues). The segment at 53–75 (HPGHLKGREIGMWYAKKQGQKNK) is DSM (DHX36-specific motif). The interval 53–105 (HPGHLKGREIGMWYAKKQGQKNKEAERQERAVVHMDERREEQIVQLLNSVQAK) is required for G4-DNA- and G4-RNA-binding. A coiled-coil region spans residues 72–157 (QKNKEAERQE…INQEKKMFRI (86 aa)). RecA-like domain stretches follow at residues 106 to 386 (NDKE…MIHI) and 387 to 628 (PGFT…DYQL). Ser161 carries the post-translational modification Phosphoserine. The 171-residue stretch at 217-387 (VNLIDNHQVT…FGNCPMIHIP (171 aa)) folds into the Helicase ATP-binding domain. 233–238 (GCGKTT) is an ATP binding site. Residues 265 to 317 (RRISAISVAERVAAERAESCGSGNSTGYQIRLQSRLPRKQGSILYCTTGIILQ) form a necessary for interaction with single-stranded DNA at the 3'-end of the G4-DNA structure region. The DEAH box signature appears at 334–337 (DEIH). Mg(2+) contacts are provided by Glu335 and His337. Residues 477–647 (ALIRYIVLEE…ELCLQIKILR (171 aa)) enclose the Helicase C-terminal domain. The tract at residues 498-557 (WDNISTLHDLLMSQVMFKSDKFLIIPLHSLMPTVNQTQVFKRTPPGVRKIVIATNIAETS) is necessary for interaction with single-stranded DNA at the 3'-end of the G4-DNA structure. Residues 517–528 (DKFLIIPLHSLM) carry the Nuclear localization signal motif. ATP contacts are provided by residues Ser557 and 602–605 (RAGR). A WH domain region spans residues 629 to 698 (PEILRTPLEE…LGVHLARLPV (70 aa)). Necessary for interaction with single-stranded DNA at the 3'-end of the G4-DNA structure regions lie at residues 638 to 697 (ELCL…ARLP), 849 to 860 (NLGKKRKMVKVY), and 870 to 900 (HPKS…IYLY). The segment at 841–905 (PKVAKIRLNL…SIYLYDCTEV (65 aa)) is OB-fold-like subdomains. Residue Lys947 is modified to N6-acetyllysine. A Phosphoserine modification is found at Ser963.

This sequence belongs to the DEAD box helicase family. DEAH subfamily. As to quaternary structure, found in a multi-helicase-TICAM1 complex at least composed of DHX36, DDX1, DDX21 and TICAM1; this complex exists in resting cells with or without dsRNA poly(I:C) ligand stimulation. Interacts (via C-terminus) with TICAM1 (via TIR domain). Interacts (via C-terminus) with DDX21; this interaction serves as bridges to TICAM1. Interacts with TERT; this interaction is dependent on the ability of DHX36 to bind to the G-quadruplex RNA (G4-RNA) structure present in the telomerase RNA template component (TERC). Interacts with DKC1; this interaction is dependent on the ability of DHX36 to bind to the G4-RNA structure present in TERC. Interacts with PARN; this interaction stimulates PARN to enhance uPA mRNA decay. Interacts with EXOSC3; this interaction occurs in a RNase-insensitive manner. Interacts with EXOSC10; this interaction occurs in a RNase-insensitive manner. Interacts with ILF3; this interaction occurs in a RNA-dependent manner. Interacts with ELAVL1; this interaction occurs in an RNA-dependent manner. Interacts with DDX5; this interaction occurs in a RNA-dependent manner. Interacts with DDX17; this interaction occurs in a RNA-dependent manner. Interacts with HDAC1; this interaction occurs in a RNA-dependent manner. Interacts with HDAC3; this interaction occurs in a RNA-dependent manner. Interacts with HDAC4. Interacts with AGO1. Interacts with AGO2. Interacts with ERCC6. Mg(2+) is required as a cofactor. Highly expressed in testis.

It is found in the nucleus. It localises to the cytoplasm. The protein localises to the cytosol. The protein resides in the stress granule. Its subcellular location is the nucleus speckle. It is found in the chromosome. It localises to the telomere. The protein localises to the mitochondrion. The protein resides in the perikaryon. Its subcellular location is the cell projection. It is found in the dendrite. It localises to the axon. It carries out the reaction ATP + H2O = ADP + phosphate + H(+). Its activity is regulated as follows. ATPase activity is enhanced in the presence of homomeric poly(U) RNAs, but not by double-stranded DNA (dsDNA), double-stranded RNA (dsRNA) and tRNA. Its function is as follows. Multifunctional ATP-dependent helicase that unwinds G-quadruplex (G4) structures. Plays a role in many biological processes such as genomic integrity, gene expression regulations and as a sensor to initiate antiviral responses. G4 structures correspond to helical structures containing guanine tetrads. Binds with high affinity to and unwinds G4 structures that are formed in nucleic acids (G4-DNA and G4-RNA). Plays a role in genomic integrity. Converts the G4-RNA structure present in telomerase RNA template component (TREC) into a double-stranded RNA to promote P1 helix formation that acts as a template boundary ensuring accurate reverse transcription. Plays a role in transcriptional regulation. Resolves G4-DNA structures in promoters of genes, such as YY1, KIT/c-kit and ALPL and positively regulates their expression. Plays a role in post-transcriptional regulation. Unwinds a G4-RNA structure located in the 3'-UTR polyadenylation site of the pre-mRNA TP53 and stimulates TP53 pre-mRNA 3'-end processing in response to ultraviolet (UV)-induced DNA damage. Binds to the precursor-microRNA-134 (pre-miR-134) terminal loop and regulates its transport into the synapto-dendritic compartment. Involved in the pre-miR-134-dependent inhibition of target gene expression and the control of dendritic spine size. Plays a role in the regulation of cytoplasmic mRNA translation and mRNA stability. Binds to both G4-RNA structures and alternative non-quadruplex-forming sequence within the 3'-UTR of the PITX1 mRNA regulating negatively PITX1 protein expression. Binds to both G4-RNA structure in the 5'-UTR and AU-rich elements (AREs) localized in the 3'-UTR of NKX2-5 mRNA to either stimulate protein translation or induce mRNA decay in an ELAVL1-dependent manner, respectively. Also binds to ARE sequences present in several mRNAs mediating exosome-mediated 3'-5' mRNA degradation. Involved in cytoplasmic urokinase-type plasminogen activator (uPA) mRNA decay. Component of a multi-helicase-TICAM1 complex that acts as a cytoplasmic sensor of viral double-stranded RNA (dsRNA) and plays a role in the activation of a cascade of antiviral responses including the induction of pro-inflammatory cytokines via the adapter molecule TICAM1. Required for early embryonic development and hematopoiesis. Involved in the regulation of cardioblast differentiation and proliferation during heart development. Involved in spermatogonia differentiation. May play a role in ossification. In Homo sapiens (Human), this protein is ATP-dependent DNA/RNA helicase DHX36.